The chain runs to 278 residues: MEVRQAINSDYAKTLDTDGLRKAFLVDQVFERDALKLTYSHIDRIIVGGVMPVARAVEVPSSLGKSIGVSYLLERRELGAINIGGDGWVDVDGTRHTVRNEEAIYIGQGTQAIAFGSDDAARPAKFYLNCAPAHTSYPTRTISLAQASPQTLGDPATSNRRTIYKFIVPEVLPTCQLSMGMTKLEPGSLWNTMPCHTHERRMEVYFYFNVADDAAVFHMMGEPNETRHILVHNEQAVISPSWSIHSGVGTRAYTFIWGMVGENQVFGDMDHIAVRDLR.

Zn(2+) contacts are provided by H196, H198, E203, and H245.

Belongs to the KduI family. Requires Zn(2+) as cofactor.

The catalysed reaction is 5-dehydro-4-deoxy-D-glucuronate = 3-deoxy-D-glycero-2,5-hexodiulosonate. Its pathway is glycan metabolism; pectin degradation; 2-dehydro-3-deoxy-D-gluconate from pectin: step 4/5. Catalyzes the isomerization of 5-dehydro-4-deoxy-D-glucuronate to 3-deoxy-D-glycero-2,5-hexodiulosonate. This Paraburkholderia phytofirmans (strain DSM 17436 / LMG 22146 / PsJN) (Burkholderia phytofirmans) protein is 4-deoxy-L-threo-5-hexosulose-uronate ketol-isomerase.